The chain runs to 356 residues: MSQYWSQLVHTLTPYVPGEQPKVDNLIKLNTNESPYPPSPLVLNALSSQLNDKLRLYPDPSSEDLKQSIATYYGVESNQVFVGNGSDEVLAHAFMTLLKQDKPILFPDISYSFYPVYCGLYEIEHQTIPLTDDFKINPADYNIENGGIIFPNPNAPTGRLLPLQAIEQIVQQNASSVVVVDEAYIDFGGESAAQLVLRYPNLLVVQTFSKSRALAGLRVGFAIGDKALIDGLERVKNSFNSYPLDRLATAGAIAAIEDEPYFQQSCEKIITTRDTLTHFLEDNGFEVIPSAANFVFTRHSEMRAEDIANQLREQAIIVRYFNKPRIDQYLRITIGTEEENTQLCRALTDILKTQNA.

Residue Lys-210 is modified to N6-(pyridoxal phosphate)lysine.

Belongs to the class-II pyridoxal-phosphate-dependent aminotransferase family. Histidinol-phosphate aminotransferase subfamily. In terms of assembly, homodimer. Pyridoxal 5'-phosphate is required as a cofactor.

The enzyme catalyses L-histidinol phosphate + 2-oxoglutarate = 3-(imidazol-4-yl)-2-oxopropyl phosphate + L-glutamate. The protein operates within amino-acid biosynthesis; L-histidine biosynthesis; L-histidine from 5-phospho-alpha-D-ribose 1-diphosphate: step 7/9. This Hydrogenovibrio crunogenus (strain DSM 25203 / XCL-2) (Thiomicrospira crunogena) protein is Histidinol-phosphate aminotransferase 1.